A 305-amino-acid polypeptide reads, in one-letter code: Thioredoxin reductase (305 aa).

28–35 (LGIETSSQ) contacts FAD. An intrachain disulfide couples Cys129 to Cys132. 272-281 (DCCDWIYRQA) lines the FAD pocket.

The protein belongs to the class-II pyridine nucleotide-disulfide oxidoreductase family. As to quaternary structure, homodimer. FAD is required as a cofactor.

Its subcellular location is the cytoplasm. It catalyses the reaction [thioredoxin]-dithiol + NADP(+) = [thioredoxin]-disulfide + NADPH + H(+). This Spironucleus barkhanus protein is Thioredoxin reductase (TRXB).